The primary structure comprises 67 residues: Small, acid-soluble spore protein 2 (67 aa).

The protein belongs to the alpha/beta-type SASP family.

In terms of biological role, SASP are bound to spore DNA. They are double-stranded DNA-binding proteins that cause DNA to change to an a-like conformation. They protect the DNA backbone from chemical and enzymatic cleavage and are thus involved in dormant spore's high resistance to UV light. This Sporosarcina ureae protein is Small, acid-soluble spore protein 2 (Su-2).